The sequence spans 172 residues: Thioredoxin Y1, chloroplastic (172 aa).

A chloroplast-targeting transit peptide spans 1 to 62 (MASISLSSST…SSTTRCTPRR (62 aa)). Residues 63-169 (IEAKKQTFDS…LIQRIEDSLK (107 aa)) enclose the Thioredoxin domain. Residues Cys93 and Cys96 each act as nucleophile in the active site. The cysteines at positions 93 and 96 are disulfide-linked.

It belongs to the thioredoxin family. Plant Y-type subfamily. As to expression, expressed in roots and seeds.

It localises to the plastid. The protein localises to the chloroplast stroma. Thiol-disulfide oxidoreductase that poorly activates chloroplastic malate dehydrogenase (NADP-MDH) and fructose-1,6-bisphosphatase. Provides reducing equivalents for peroxiredoxin Q. The sequence is that of Thioredoxin Y1, chloroplastic from Arabidopsis thaliana (Mouse-ear cress).